We begin with the raw amino-acid sequence, 231 residues long: 7-cyano-7-deazaguanine synthase (231 aa).

ATP is bound at residue 8–18; the sequence is FSGGQDSTTCL. Zn(2+) contacts are provided by Cys188, Cys197, Cys200, and Cys203.

Belongs to the QueC family. Zn(2+) serves as cofactor.

It carries out the reaction 7-carboxy-7-deazaguanine + NH4(+) + ATP = 7-cyano-7-deazaguanine + ADP + phosphate + H2O + H(+). It participates in purine metabolism; 7-cyano-7-deazaguanine biosynthesis. Its function is as follows. Catalyzes the ATP-dependent conversion of 7-carboxy-7-deazaguanine (CDG) to 7-cyano-7-deazaguanine (preQ(0)). The polypeptide is 7-cyano-7-deazaguanine synthase (Salmonella schwarzengrund (strain CVM19633)).